Here is a 408-residue protein sequence, read N- to C-terminus: Exo-alpha-sialidase ARB_03431 (408 aa).

Positions 1 to 22 (MGIKQWLLSLVVVAISATATQA) are cleaved as a signal peptide. 4 residues coordinate substrate: Arg-62, Arg-81, Asp-87, and Gln-150. Residue Asn-237 is glycosylated (N-linked (GlcNAc...) asparagine). Substrate contacts are provided by residues Arg-267, Arg-324, 324 to 325 (RT), 333 to 334 (YD), Lys-339, Tyr-360, Asp-378, and 378 to 380 (DWY). An N-linked (GlcNAc...) asparagine glycan is attached at Asn-398.

The protein belongs to the glycosyl hydrolase 33 family.

It is found in the secreted. It carries out the reaction Hydrolysis of alpha-(2-&gt;3)-, alpha-(2-&gt;6)-, alpha-(2-&gt;8)- glycosidic linkages of terminal sialic acid residues in oligosaccharides, glycoproteins, glycolipids, colominic acid and synthetic substrates.. In terms of biological role, sialidase is able to release sialic acid from a wide variety of natural substrates. This Arthroderma benhamiae (strain ATCC MYA-4681 / CBS 112371) (Trichophyton mentagrophytes) protein is Exo-alpha-sialidase ARB_03431.